Here is a 318-residue protein sequence, read N- to C-terminus: uncharacterized protein (318 aa).

This is an uncharacterized protein from Schizosaccharomyces pombe (strain 972 / ATCC 24843) (Fission yeast).